We begin with the raw amino-acid sequence, 362 residues long: MEKSESNSEGLYLQNILNVPPPQRFIVLIILALWIWTWILKFFLHSNLDVSQVILTRVPHDIRPGYTLQQLHRTARNFALKITRIIIPFHFATVFLFEFMNIIEGPLKNIILIVYFLPLIQCVTIFWFLLKECQIIKYCTRRCLLIESSPRSLRNTYILISDTLTSFAKPLIDFTLFTSLIFREPFTHFDLSVALLPVLVRLLQCLREYRLLHEATLLFNALKYSCNLPILFCTWRSRVYEGSINEERLHHVQRWFMLINSSYTLFWDVRMDWSLDSLTSLRSRSKSAVTLKKKMYHSAILVDFLLRFWWLWVYLSQNLKLVAADSDYIFFQGEMQYFEVIRRGIWVVFKLDAEYYIKFASK.

Residues 1 to 24 (MEKSESNSEGLYLQNILNVPPPQR) lie on the Extracellular side of the membrane. A helical membrane pass occupies residues 25-45 (FIVLIILALWIWTWILKFFLH). The Cytoplasmic segment spans residues 46–84 (SNLDVSQVILTRVPHDIRPGYTLQQLHRTARNFALKITR). A helical transmembrane segment spans residues 85–105 (IIIPFHFATVFLFEFMNIIEG). Topologically, residues 106 to 109 (PLKN) are extracellular. A helical transmembrane segment spans residues 110 to 130 (IILIVYFLPLIQCVTIFWFLL). The Cytoplasmic segment spans residues 131 to 362 (KECQIIKYCT…AEYYIKFASK (232 aa)). The region spanning 181–362 (IFREPFTHFD…AEYYIKFASK (182 aa)) is the EXS domain.

This sequence belongs to the ERD1 family.

It is found in the endoplasmic reticulum membrane. Its function is as follows. Required for the retention of luminal endoplasmic reticulum proteins, affects glycoprotein processing in the Golgi apparatus. This chain is Protein ERD1 (ERD1), found in Saccharomyces cerevisiae (strain ATCC 204508 / S288c) (Baker's yeast).